We begin with the raw amino-acid sequence, 241 residues long: MSPLEQFRVTKLLDIPALWGIDLSFTNCSLVMVLASVSSILLLCWALRKINVVPGPSQTAVELIYGFVANTLESNAGAEGLRYIPLVMTTFLFVLACNLVGILPFGFTATSHLSVTLALSLVVCTAITVIGFRHQGLHFLRIFLPEGTPLWLAPMMVFIKLFAYVARPVSLAIRLAANMIAGHTIIAVIADFVLKMHLVLAPLPFAFIMGLIAFEIFVAILQAYIFTVLTTVYLSDAVAGH.

7 helical membrane passes run 27–47, 52–72, 87–107, 112–132, 142–162, 175–195, and 198–218; these read NCSLVMVLASVSSILLLCWAL, VVPGPSQTAVELIYGFVANTL, VMTTFLFVLACNLVGILPFGF, HLSVTLALSLVVCTAITVIGF, IFLPEGTPLWLAPMMVFIKLF, LAANMIAGHTIIAVIADFVLK, and LVLAPLPFAFIMGLIAFEIFV.

Belongs to the ATPase A chain family. F-type ATPases have 2 components, CF(1) - the catalytic core - and CF(0) - the membrane proton channel. CF(1) has five subunits: alpha(3), beta(3), gamma(1), delta(1), epsilon(1). CF(0) has three main subunits: a(1), b(2) and c(9-12). The alpha and beta chains form an alternating ring which encloses part of the gamma chain. CF(1) is attached to CF(0) by a central stalk formed by the gamma and epsilon chains, while a peripheral stalk is formed by the delta and b chains.

Its subcellular location is the cell inner membrane. Functionally, key component of the proton channel; it plays a direct role in the translocation of protons across the membrane. The chain is ATP synthase subunit a from Anaplasma marginale (strain St. Maries).